A 286-amino-acid chain; its full sequence is Soluble epoxide hydrolase (286 aa).

The AB hydrolase-1 domain occupies 26-123 (YPLVLLHGWP…DLVERLFILD (98 aa)). Residue D99 is the Nucleophile of the active site. Y209 serves as the catalytic Proton donor. H264 functions as the Proton acceptor in the catalytic mechanism.

Belongs to the AB hydrolase superfamily. Epoxide hydrolase family. As to quaternary structure, homotetramer.

It localises to the cytoplasm. Its subcellular location is the cell membrane. The enzyme catalyses an epoxide + H2O = an ethanediol. Involved in catabolic degradation of epoxides. Shows highest activity towards C6 and C7 carbocyclic epoxides. Also active towards linear 1,2-epoxyalkanes. The polypeptide is Soluble epoxide hydrolase (Corynebacterium sp. (strain C12)).